The primary structure comprises 334 residues: Holliday junction branch migration complex subunit RuvB (334 aa).

Residues 1–181 (MHDRLISGTE…FGIVQRLEFY (181 aa)) are large ATPase domain (RuvB-L). ATP is bound by residues I20, R21, G62, K65, T66, T67, 128-130 (EDY), R171, Y181, and R218. A Mg(2+)-binding site is contributed by T66. Residues 182–252 (SVEDLTHIVT…MAQRALDMLN (71 aa)) form a small ATPAse domain (RuvB-S) region. Residues 255-334 (KDGLDTLDRR…FGLTPPEPKN (80 aa)) form a head domain (RuvB-H) region. The DNA site is built by R310 and R315.

The protein belongs to the RuvB family. In terms of assembly, homohexamer. Forms an RuvA(8)-RuvB(12)-Holliday junction (HJ) complex. HJ DNA is sandwiched between 2 RuvA tetramers; dsDNA enters through RuvA and exits via RuvB. An RuvB hexamer assembles on each DNA strand where it exits the tetramer. Each RuvB hexamer is contacted by two RuvA subunits (via domain III) on 2 adjacent RuvB subunits; this complex drives branch migration. In the full resolvosome a probable DNA-RuvA(4)-RuvB(12)-RuvC(2) complex forms which resolves the HJ.

It localises to the cytoplasm. The catalysed reaction is ATP + H2O = ADP + phosphate + H(+). The RuvA-RuvB-RuvC complex processes Holliday junction (HJ) DNA during genetic recombination and DNA repair, while the RuvA-RuvB complex plays an important role in the rescue of blocked DNA replication forks via replication fork reversal (RFR). RuvA specifically binds to HJ cruciform DNA, conferring on it an open structure. The RuvB hexamer acts as an ATP-dependent pump, pulling dsDNA into and through the RuvAB complex. RuvB forms 2 homohexamers on either side of HJ DNA bound by 1 or 2 RuvA tetramers; 4 subunits per hexamer contact DNA at a time. Coordinated motions by a converter formed by DNA-disengaged RuvB subunits stimulates ATP hydrolysis and nucleotide exchange. Immobilization of the converter enables RuvB to convert the ATP-contained energy into a lever motion, pulling 2 nucleotides of DNA out of the RuvA tetramer per ATP hydrolyzed, thus driving DNA branch migration. The RuvB motors rotate together with the DNA substrate, which together with the progressing nucleotide cycle form the mechanistic basis for DNA recombination by continuous HJ branch migration. Branch migration allows RuvC to scan DNA until it finds its consensus sequence, where it cleaves and resolves cruciform DNA. In Acinetobacter baylyi (strain ATCC 33305 / BD413 / ADP1), this protein is Holliday junction branch migration complex subunit RuvB.